The following is a 187-amino-acid chain: MNLQHHFLIAMPTLQDPLFKRSVVYICEHNADGAMGLIVNKPMENLTVEGILKKLKIAPTAREPDIRLDKPVFSGGPLAEDRGFILHSAQKTFTSSIRVSDNTVITTSRDVLETLGTAEQPDNVLVALGYCAWEKDQLEQELLENAWLTSPANSNILFHTPIAERWREAAKSIGVDIHNIASEAGHA.

It belongs to the UPF0301 (AlgH) family.

In Erwinia tasmaniensis (strain DSM 17950 / CFBP 7177 / CIP 109463 / NCPPB 4357 / Et1/99), this protein is UPF0301 protein ETA_28320.